A 299-amino-acid polypeptide reads, in one-letter code: Probable arylamine N-acetyltransferase 2 (299 aa).

The active-site Acyl-thioester intermediate is the C75. Catalysis depends on residues H115 and D130.

It belongs to the arylamine N-acetyltransferase family.

The catalysed reaction is an arylamine + acetyl-CoA = an N-acetylarylamine + CoA. The protein is Probable arylamine N-acetyltransferase 2 of Dictyostelium discoideum (Social amoeba).